A 335-amino-acid polypeptide reads, in one-letter code: UDP-3-O-acylglucosamine N-acyltransferase (335 aa).

The active-site Proton acceptor is the H225.

It belongs to the transferase hexapeptide repeat family. LpxD subfamily. Homotrimer.

The catalysed reaction is a UDP-3-O-[(3R)-3-hydroxyacyl]-alpha-D-glucosamine + a (3R)-hydroxyacyl-[ACP] = a UDP-2-N,3-O-bis[(3R)-3-hydroxyacyl]-alpha-D-glucosamine + holo-[ACP] + H(+). The protein operates within bacterial outer membrane biogenesis; LPS lipid A biosynthesis. Functionally, catalyzes the N-acylation of UDP-3-O-acylglucosamine using 3-hydroxyacyl-ACP as the acyl donor. Is involved in the biosynthesis of lipid A, a phosphorylated glycolipid that anchors the lipopolysaccharide to the outer membrane of the cell. This is UDP-3-O-acylglucosamine N-acyltransferase from Delftia acidovorans (strain DSM 14801 / SPH-1).